The sequence spans 266 residues: MRLIPLHNATDVGLWSARHIVKRINAFKPTAERPFVLGLPTGSTPLQTYKRLIEIYQAGEVSFRHVVTFNMDEYVGLAESHPESYHSFMYNNFFNHIDIHKENINLLNGNAPDVDAECRRYEEKISSYGKINLFMGGVGNDGHIAFNEPASSLASRTRIKTLTEDTRIANSRFFNGDISLVPKYALTVGVGTLLDAEEVMILVTGHAKSLALQAAVEGSVNHMWTISALQLHPKSVVVCDQPATMELKVKTVNYFRELEAENMKDL.

Asp-72 (proton acceptor; for enolization step) is an active-site residue. Asp-141 (for ring-opening step) is an active-site residue. His-143 functions as the Proton acceptor; for ring-opening step in the catalytic mechanism. Catalysis depends on Glu-148, which acts as the For ring-opening step.

Belongs to the glucosamine/galactosamine-6-phosphate isomerase family. NagB subfamily. In terms of assembly, homohexamer.

It carries out the reaction alpha-D-glucosamine 6-phosphate + H2O = beta-D-fructose 6-phosphate + NH4(+). It participates in amino-sugar metabolism; N-acetylneuraminate degradation; D-fructose 6-phosphate from N-acetylneuraminate: step 5/5. Allosterically activated by N-acetylglucosamine 6-phosphate (GlcNAc6P). Its function is as follows. Catalyzes the reversible isomerization-deamination of glucosamine 6-phosphate (GlcN6P) to form fructose 6-phosphate (Fru6P) and ammonium ion. This Edwardsiella ictaluri (strain 93-146) protein is Glucosamine-6-phosphate deaminase.